We begin with the raw amino-acid sequence, 343 residues long: tRNA N6-adenosine threonylcarbamoyltransferase (343 aa).

Fe cation is bound by residues His-112 and His-116. Residues 135–139 (LVSGG), Asp-168, Gly-181, and Asn-273 contribute to the substrate site. Residue Asp-301 coordinates Fe cation.

The protein belongs to the KAE1 / TsaD family. Requires Fe(2+) as cofactor.

The protein localises to the cytoplasm. The enzyme catalyses L-threonylcarbamoyladenylate + adenosine(37) in tRNA = N(6)-L-threonylcarbamoyladenosine(37) in tRNA + AMP + H(+). Required for the formation of a threonylcarbamoyl group on adenosine at position 37 (t(6)A37) in tRNAs that read codons beginning with adenine. Is involved in the transfer of the threonylcarbamoyl moiety of threonylcarbamoyl-AMP (TC-AMP) to the N6 group of A37, together with TsaE and TsaB. TsaD likely plays a direct catalytic role in this reaction. The polypeptide is tRNA N6-adenosine threonylcarbamoyltransferase (Azoarcus sp. (strain BH72)).